Consider the following 579-residue polypeptide: Aspartate--tRNA(Asp/Asn) ligase (579 aa).

Glu-171 lines the L-aspartate pocket. Positions 195 to 198 (QLFK) are aspartate. Residue Arg-217 participates in L-aspartate binding. Residues 217 to 219 (RDE) and Gln-226 contribute to the ATP site. His-444 is an L-aspartate binding site. ATP is bound at residue Glu-475. Arg-482 provides a ligand contact to L-aspartate. Position 527-530 (527-530 (GLDR)) interacts with ATP.

The protein belongs to the class-II aminoacyl-tRNA synthetase family. Type 1 subfamily. Homodimer.

The protein resides in the cytoplasm. It carries out the reaction tRNA(Asx) + L-aspartate + ATP = L-aspartyl-tRNA(Asx) + AMP + diphosphate. In terms of biological role, aspartyl-tRNA synthetase with relaxed tRNA specificity since it is able to aspartylate not only its cognate tRNA(Asp) but also tRNA(Asn). Reaction proceeds in two steps: L-aspartate is first activated by ATP to form Asp-AMP and then transferred to the acceptor end of tRNA(Asp/Asn). The polypeptide is Aspartate--tRNA(Asp/Asn) ligase (Thermotoga maritima (strain ATCC 43589 / DSM 3109 / JCM 10099 / NBRC 100826 / MSB8)).